The following is an 83-amino-acid chain: Small ribosomal subunit protein uS17 (83 aa).

Belongs to the universal ribosomal protein uS17 family. Part of the 30S ribosomal subunit.

In terms of biological role, one of the primary rRNA binding proteins, it binds specifically to the 5'-end of 16S ribosomal RNA. The sequence is that of Small ribosomal subunit protein uS17 from Nitratiruptor sp. (strain SB155-2).